A 519-amino-acid chain; its full sequence is O-fucosyltransferase 1 (519 aa).

Residues 1-24 (MRRLGHHRLHGKTGGVGTKGMVAK) are Cytoplasmic-facing. The helical; Signal-anchor for type II membrane protein transmembrane segment at 25–45 (LSIGVIVLLICTLSLLFSANI) threads the bilayer. Over 46 to 519 (GSNREPTRPS…TNSTVTGLER (474 aa)) the chain is Lumenal. The tract at residues 67–86 (KSGGWRPSSAPRSDWPPPTK) is disordered. Residue asparagine 118 is glycosylated (N-linked (GlcNAc...) asparagine). Position 260–262 (260–262 (HLR)) interacts with substrate. 3 N-linked (GlcNAc...) asparagine glycosylation sites follow: asparagine 327, asparagine 357, and asparagine 511. Residues 497-519 (RLESIRDPDSTSQTNSTVTGLER) are disordered. The span at 506–519 (STSQTNSTVTGLER) shows a compositional bias: polar residues.

Belongs to the glycosyltransferase GT106 family.

Its subcellular location is the golgi apparatus membrane. It participates in glycan metabolism. This chain is O-fucosyltransferase 1, found in Arabidopsis thaliana (Mouse-ear cress).